The primary structure comprises 341 residues: tRNA (guanine-N(7)-)-methyltransferase (341 aa).

Residues Glu-75, Glu-100, Asp-127, and Asp-150 each coordinate S-adenosyl-L-methionine. Asp-150 is an active-site residue. Lys-154 serves as a coordination point for substrate. The segment at 156-161 (RHNKRR) is interaction with RNA. Residue Asp-186 coordinates substrate.

The protein belongs to the class I-like SAM-binding methyltransferase superfamily. TrmB family.

It carries out the reaction guanosine(46) in tRNA + S-adenosyl-L-methionine = N(7)-methylguanosine(46) in tRNA + S-adenosyl-L-homocysteine. Its pathway is tRNA modification; N(7)-methylguanine-tRNA biosynthesis. Catalyzes the formation of N(7)-methylguanine at position 46 (m7G46) in tRNA. In Xanthomonas euvesicatoria pv. vesicatoria (strain 85-10) (Xanthomonas campestris pv. vesicatoria), this protein is tRNA (guanine-N(7)-)-methyltransferase.